The following is a 160-amino-acid chain: Transcriptional repressor NrdR (160 aa).

Over residues 1–11 (MRCPSCNSLDT) the composition is skewed to polar residues. A disordered region spans residues 1–20 (MRCPSCNSLDTQVKDSRPTE). The segment at 3 to 34 (CPSCNSLDTQVKDSRPTEDSAVIRRRRVCMAC) is a zinc-finger region. In terms of domain architecture, ATP-cone spans 49-139 (LTVIKRNGRR…VYRNFREAKD (91 aa)).

Belongs to the NrdR family. The cofactor is Zn(2+).

Negatively regulates transcription of bacterial ribonucleotide reductase nrd genes and operons by binding to NrdR-boxes. This chain is Transcriptional repressor NrdR, found in Nitrobacter hamburgensis (strain DSM 10229 / NCIMB 13809 / X14).